Consider the following 141-residue polypeptide: uncharacterized protein (141 aa).

4 consecutive transmembrane segments (helical) span residues tyrosine 7 to proline 24, phenylalanine 39 to isoleucine 56, phenylalanine 69 to phenylalanine 91, and phenylalanine 116 to isoleucine 138.

It localises to the cell membrane. This is an uncharacterized protein from Aquifex aeolicus (strain VF5).